The sequence spans 436 residues: Calcium/calmodulin-regulated receptor-like kinase 2 (436 aa).

A helical transmembrane segment spans residues 7-34; it reads LVVIGISVGLALGLLLALLLFFAIKWYY. The interval 65–88 is disordered; sequence DRANTESSQPPENGAPTQHQPWWN. A compositionally biased stretch (polar residues) spans 69–88; the sequence is TESSQPPENGAPTQHQPWWN. Residues 114–375 enclose the Protein kinase domain; sequence QNFTTVLGQG…PSIGEVTQFI (262 aa). Residues 120 to 128 and K142 each bind ATP; that span reads LGQGSFGPV. Phosphotyrosine is present on Y187. D239 functions as the Proton acceptor in the catalytic mechanism. Phosphothreonine is present on T276. Y284 is modified (phosphotyrosine).

It belongs to the protein kinase superfamily. Ser/Thr protein kinase family.

Its subcellular location is the cell membrane. It catalyses the reaction L-seryl-[protein] + ATP = O-phospho-L-seryl-[protein] + ADP + H(+). It carries out the reaction L-threonyl-[protein] + ATP = O-phospho-L-threonyl-[protein] + ADP + H(+). The chain is Calcium/calmodulin-regulated receptor-like kinase 2 from Arabidopsis thaliana (Mouse-ear cress).